We begin with the raw amino-acid sequence, 740 residues long: DNA (cytosine-5)-methyltransferase 3C (740 aa).

Disordered regions lie at residues L75–P99 and F248–N312. An ADD domain is found at D309–D441. Residues H320 to E350 form a GATA-type; atypical zinc finger. The PHD-type; atypical zinc-finger motif lies at Q361–R417. The region spanning I462–E740 is the SAM-dependent MTase C5-type domain. S-adenosyl-L-methionine contacts are provided by I471, T473, E492, D514, and I515. C538 is a catalytic residue. 2 residues coordinate S-adenosyl-L-methionine: R719 and W721.

Belongs to the class I-like SAM-binding methyltransferase superfamily. C5-methyltransferase family. As to quaternary structure, homodimer. Interacts with DNMT3L. Interacts with SPOCD1; recruiting Dnmt3C to transposons. As to expression, specifically expressed in testis.

It is found in the nucleus. The catalysed reaction is a 2'-deoxycytidine in DNA + S-adenosyl-L-methionine = a 5-methyl-2'-deoxycytidine in DNA + S-adenosyl-L-homocysteine + H(+). Functionally, DNA methyltransferase that specifically methylates the promoters of evolutionarily young retrotransposons in the male germline. De novo methylation and subsequent repression of transposable elements prevents their mobilization, which is essential for germline integrity. Compared to Dnmt3a and Dnmt3b, shows lower DNA methyltransferase efficiency. This is DNA (cytosine-5)-methyltransferase 3C from Mus musculus (Mouse).